Reading from the N-terminus, the 567-residue chain is Eukaryotic translation initiation factor 3 subunit D (567 aa).

Disordered regions lie at residues 12-34 (PVKSAWGPPETEQIGGDIPYAPF) and 122-160 (GQNVQRGGRGGRYGSSGGRGAGDTVVSRSSGAGGARGRR). Positions 128-142 (GGRGGRYGSSGGRGA) are enriched in gly residues. The RNA gate stretch occupies residues 300–314 (PFDYLTVNENAYDSP).

The protein belongs to the eIF-3 subunit D family. Component of the eukaryotic translation initiation factor 3 (eIF-3) complex. The eIF-3 complex appears to include tif32/eif3a, SPAC25G10.08/eif3b, tif33/eif3c, SPBC4C3.07/eif3f, tif35/eif3g and sum1/eif3i. This set of common subunits may also associate exclusively with either moe1/eif3d and int6/eif3e, or with SPAC821.05/eif3h and SPAC1751.03/eif3m. The eIF-3 complex may also include SPAC3A12.13c/eif3j.

It is found in the cytoplasm. In terms of biological role, mRNA cap-binding component of the eukaryotic translation initiation factor 3 (eIF-3) complex, which is involved in protein synthesis of a specialized repertoire of mRNAs and, together with other initiation factors, stimulates binding of mRNA and methionyl-tRNAi to the 40S ribosome. The eIF-3 complex specifically targets and initiates translation of a subset of mRNAs involved in cell proliferation. In the eIF-3 complex, eif3d specifically recognizes and binds the 7-methylguanosine cap of a subset of mRNAs. The protein is Eukaryotic translation initiation factor 3 subunit D (moe1) of Schizosaccharomyces pombe (strain 972 / ATCC 24843) (Fission yeast).